The chain runs to 53 residues: Large ribosomal subunit protein bL32 (53 aa).

The segment at 1-27 (MAVQQNKKSRSRRDMRRSHDALTTAAV) is disordered. The span at 7–16 (KKSRSRRDMR) shows a compositional bias: basic residues.

Belongs to the bacterial ribosomal protein bL32 family.

This chain is Large ribosomal subunit protein bL32, found in Glaesserella parasuis serovar 5 (strain SH0165) (Haemophilus parasuis).